The sequence spans 279 residues: 3-methyl-2-oxobutanoate hydroxymethyltransferase (279 aa).

Residues aspartate 43 and aspartate 82 each contribute to the Mg(2+) site. 3-methyl-2-oxobutanoate is bound by residues aspartate 43–serine 44, aspartate 82, and lysine 112. Glutamate 114 provides a ligand contact to Mg(2+). The Proton acceptor role is filled by glutamate 181.

It belongs to the PanB family. Homodecamer; pentamer of dimers. Mg(2+) is required as a cofactor.

The protein localises to the cytoplasm. The enzyme catalyses 3-methyl-2-oxobutanoate + (6R)-5,10-methylene-5,6,7,8-tetrahydrofolate + H2O = 2-dehydropantoate + (6S)-5,6,7,8-tetrahydrofolate. The protein operates within cofactor biosynthesis; (R)-pantothenate biosynthesis; (R)-pantoate from 3-methyl-2-oxobutanoate: step 1/2. Catalyzes the reversible reaction in which hydroxymethyl group from 5,10-methylenetetrahydrofolate is transferred onto alpha-ketoisovalerate to form ketopantoate. The sequence is that of 3-methyl-2-oxobutanoate hydroxymethyltransferase from Bacillus pumilus (strain SAFR-032).